Reading from the N-terminus, the 85-residue chain is Protein WIR1B (85 aa).

Residues 1 to 12 (MASHSAAGRRPT) are Cytoplasmic-facing. The helical transmembrane segment at 13 to 34 (ALVHIALFVAIAAVIINSSVCL) threads the bilayer. Over 35–85 (GAAVHDAATSGTGALDPNVPAVPTPGGAGQPYTGRGCRTVYGCKPPAGSQP) the chain is Extracellular.

The protein resides in the membrane. Functionally, associated with pathogen defense. The sequence is that of Protein WIR1B (WIR1B) from Triticum aestivum (Wheat).